The primary structure comprises 681 residues: Envelope glycoprotein (681 aa).

The signal sequence occupies residues 1-18 (MKTTCLFISLILIQGIKT). Topologically, residues 19–648 (LPILEIASNN…GLGGKWWTSD (630 aa)) are extracellular. Positions 38-188 (SGTLQKTEDV…FSRQGQGYRH (151 aa)) are receptor-binding. Asparagine 94, asparagine 171, asparagine 190, asparagine 202, asparagine 207, asparagine 219, asparagine 223, and asparagine 255 each carry an N-linked (GlcNAc...) asparagine; by host glycan. Residues 223–351 (NQTCAPSKIP…STNNTSKNNF (129 aa)) are disordered. Over residues 244-259 (PTSTPTDATTLNTTDP) the composition is skewed to low complexity. The interval 277 to 455 (EPYTTSDAVT…PFLDGLINAP (179 aa)) is mucin-like region. Polar residues-rich tracts occupy residues 278 to 290 (PYTT…KQGL) and 308 to 341 (EGNN…TTAI). N-linked (GlcNAc...) asparagine; by host glycosylation is found at asparagine 310, asparagine 323, asparagine 326, asparagine 337, asparagine 344, asparagine 345, asparagine 350, asparagine 360, asparagine 389, asparagine 397, asparagine 408, and asparagine 487. The span at 342–351 (STNNTSKNNF) shows a compositional bias: low complexity. Positions 366-414 (TQSTATENEQTSAPSKTTLPPTGNLTTAKSTNNTKGPTTTAPNMTNGHL) are enriched in polar residues. A disordered region spans residues 366–425 (TQSTATENEQTSAPSKTTLPPTGNLTTAKSTNNTKGPTTTAPNMTNGHLTSPSPTPNPTT). Positions 529 to 549 (GLSWIPFFGPGIEGLYTAGLI) are fusion peptide. N-linked (GlcNAc...) asparagine; by host glycans are attached at residues asparagine 564 and asparagine 619. Residues 649-669 (WGVLTNLGILLLLSIAVLIAL) form a helical membrane-spanning segment. Topologically, residues 670–681 (SCICRIFTKYIG) are cytoplasmic. 2 S-palmitoyl cysteine; by host lipidation sites follow: cysteine 671 and cysteine 673.

Belongs to the filoviruses glycoprotein family. In terms of assembly, homotrimer; each monomer consists of a GP1 and a GP2 subunit linked by disulfide bonds. The resulting peplomers (GP1,2) protrude from the virus surface as spikes. GP1,2 interacts with human CD209 and CLEC4M (collectively referred to as DC-SIGN(R)). Asialoglycoprotein receptor (ASGP-R) may be a liver-specific receptor for GP1,2. Members of the Tyro3 receptor tyrosine kinase family may be cell entry factors interacting with GP1,2. N-glycosylated. In terms of processing, O-glycosylated in the mucin-like region. Post-translationally, specific enzymatic cleavages in vivo yield mature proteins. The precursor is processed into GP1 and GP2 by host cell furin in the trans Golgi, and maybe by other host proteases, to yield the mature GP1 and GP2 proteins. The cleavage site corresponds to the furin optimal cleavage sequence [KR]-X-[KR]-R. GP1 is phosphorylated on serine residues between residues 260 and 273.

The protein resides in the virion membrane. Its subcellular location is the host cell membrane. Its function is as follows. GP1 is responsible for binding to the receptor(s) on target cells. Interacts with CD209/DC-SIGN and CLEC4M/DC-SIGNR which act as cofactors for virus entry into the host cell. Binding to CD209 and CLEC4M, which are respectively found on dendritic cells (DCs), and on endothelial cells of liver sinusoids and lymph node sinuses, facilitate infection of macrophages and endothelial cells. These interactions not only facilitate virus cell entry, but also allow capture of viral particles by DCs and subsequent transmission to susceptible cells without DCs infection (trans infection). GP2 acts as a class I viral fusion protein. Under the current model, the protein has at least 3 conformational states: pre-fusion native state, pre-hairpin intermediate state, and post-fusion hairpin state. During viral and target cell membrane fusion, the coiled coil regions (heptad repeats) assume a trimer-of-hairpins structure, positioning the fusion peptide in close proximity to the C-terminal region of the ectodomain. The formation of this structure appears to drive apposition and subsequent fusion of viral and target cell membranes. Responsible for penetration of the virus into the cell cytoplasm by mediating the fusion of the membrane of the endocytosed virus particle with the endosomal membrane. Low pH in endosomes induces an irreversible conformational change in GP2, releasing the fusion hydrophobic peptide. The protein is Envelope glycoprotein (GP) of Lake Victoria marburgvirus (strain Popp-67) (MARV).